Reading from the N-terminus, the 267-residue chain is MHRIAVPAATGAPTAQAPVKVAARNLDFYYDKYHALKSINIEIPEKRVTALIGPSGCGKSTLLRIFNRIYALYPKMEARGEVLLDNENILSPKYPMNRLRSKVGMVFQKPVPFPMTIFENVAYGIRHHEKLSKADMQNRVEQALRQGALWDEVKDKLGQSALGLSGGQQQRLCIARAVALRPDVLLLDEPTSALDPISTSRIEQLVEELKRDYTIVIVTHNMQQAARVSDYTAFMYLGDLIEHDRTETIFSQPSKQQTEDYITGRFG.

The 242-residue stretch at 21 to 262 folds into the ABC transporter domain; that stretch reads VAARNLDFYY…PSKQQTEDYI (242 aa). ATP is bound at residue 53–60; sequence GPSGCGKS.

This sequence belongs to the ABC transporter superfamily. Phosphate importer (TC 3.A.1.7) family. The complex is composed of two ATP-binding proteins (PstB), two transmembrane proteins (PstC and PstA) and a solute-binding protein (PstS).

The protein resides in the cell inner membrane. It catalyses the reaction phosphate(out) + ATP + H2O = ADP + 2 phosphate(in) + H(+). Functionally, part of the ABC transporter complex PstSACB involved in phosphate import. Responsible for energy coupling to the transport system. This is Phosphate import ATP-binding protein PstB from Xanthomonas axonopodis pv. citri (strain 306).